A 216-amino-acid chain; its full sequence is MRLRNKPWAEEMITNHPEVIVPNPEDFKGNWQVVFGNNNPIHIEVGTGKGQFVTGMALQNPDINYIGIELYDSVIVCALEKVLEAKSPANLRLLKVNGADLNKFFNKNDVARVYLNFSDPWPKTRHAKRRLTHGDFLKLYESILVDNGEIHFKTDNRGLFEFSLISISEYGMLLKYVSLDLHANMPEDNVMTEYEQKFSAKGQPIYRLESQFITKL.

Residues E44, E69, N97, and D119 each contribute to the S-adenosyl-L-methionine site. The active site involves D119. Substrate-binding positions include K123, D155, and 192–195 (TEYE).

It belongs to the class I-like SAM-binding methyltransferase superfamily. TrmB family.

It catalyses the reaction guanosine(46) in tRNA + S-adenosyl-L-methionine = N(7)-methylguanosine(46) in tRNA + S-adenosyl-L-homocysteine. Its pathway is tRNA modification; N(7)-methylguanine-tRNA biosynthesis. Catalyzes the formation of N(7)-methylguanine at position 46 (m7G46) in tRNA. The chain is tRNA (guanine-N(7)-)-methyltransferase from Lysinibacillus sphaericus (strain C3-41).